Here is a 611-residue protein sequence, read N- to C-terminus: Dihydroxy-acid dehydratase (611 aa).

A Mg(2+)-binding site is contributed by aspartate 81. Position 122 (cysteine 122) interacts with [2Fe-2S] cluster. Mg(2+) is bound by residues aspartate 123 and lysine 124. The residue at position 124 (lysine 124) is an N6-carboxylysine. Cysteine 195 contributes to the [2Fe-2S] cluster binding site. Glutamate 491 lines the Mg(2+) pocket. Serine 517 functions as the Proton acceptor in the catalytic mechanism.

The protein belongs to the IlvD/Edd family. As to quaternary structure, homodimer. Requires [2Fe-2S] cluster as cofactor. Mg(2+) serves as cofactor.

The enzyme catalyses (2R)-2,3-dihydroxy-3-methylbutanoate = 3-methyl-2-oxobutanoate + H2O. The catalysed reaction is (2R,3R)-2,3-dihydroxy-3-methylpentanoate = (S)-3-methyl-2-oxopentanoate + H2O. Its pathway is amino-acid biosynthesis; L-isoleucine biosynthesis; L-isoleucine from 2-oxobutanoate: step 3/4. It participates in amino-acid biosynthesis; L-valine biosynthesis; L-valine from pyruvate: step 3/4. Functions in the biosynthesis of branched-chain amino acids. Catalyzes the dehydration of (2R,3R)-2,3-dihydroxy-3-methylpentanoate (2,3-dihydroxy-3-methylvalerate) into 2-oxo-3-methylpentanoate (2-oxo-3-methylvalerate) and of (2R)-2,3-dihydroxy-3-methylbutanoate (2,3-dihydroxyisovalerate) into 2-oxo-3-methylbutanoate (2-oxoisovalerate), the penultimate precursor to L-isoleucine and L-valine, respectively. The sequence is that of Dihydroxy-acid dehydratase from Histophilus somni (strain 129Pt) (Haemophilus somnus).